The chain runs to 293 residues: NAD kinase (293 aa).

The active-site Proton acceptor is the aspartate 68. NAD(+)-binding positions include 68 to 69, 142 to 143, arginine 153, aspartate 172, and 183 to 188; these read DG, ND, and TAYSLS.

It belongs to the NAD kinase family. The cofactor is a divalent metal cation.

Its subcellular location is the cytoplasm. It carries out the reaction NAD(+) + ATP = ADP + NADP(+) + H(+). Functionally, involved in the regulation of the intracellular balance of NAD and NADP, and is a key enzyme in the biosynthesis of NADP. Catalyzes specifically the phosphorylation on 2'-hydroxyl of the adenosine moiety of NAD to yield NADP. This is NAD kinase from Lachnospira eligens (strain ATCC 27750 / DSM 3376 / VPI C15-48 / C15-B4) (Eubacterium eligens).